We begin with the raw amino-acid sequence, 63 residues long: Large ribosomal subunit protein bL35 (63 aa).

It belongs to the bacterial ribosomal protein bL35 family.

In Campylobacter jejuni subsp. doylei (strain ATCC BAA-1458 / RM4099 / 269.97), this protein is Large ribosomal subunit protein bL35.